Reading from the N-terminus, the 78-residue chain is DNA-directed RNA polymerase subunit omega (78 aa).

It belongs to the RNA polymerase subunit omega family. As to quaternary structure, in cyanobacteria the RNAP catalytic core is composed of 2 alpha, 1 beta, 1 beta', 1 gamma and 1 omega subunit. When a sigma factor is associated with the core the holoenzyme is formed, which can initiate transcription.

It carries out the reaction RNA(n) + a ribonucleoside 5'-triphosphate = RNA(n+1) + diphosphate. Its function is as follows. Promotes RNA polymerase assembly. Latches the N- and C-terminal regions of the beta' subunit thereby facilitating its interaction with the beta and alpha subunits. The chain is DNA-directed RNA polymerase subunit omega from Prochlorococcus marinus (strain MIT 9515).